A 138-amino-acid polypeptide reads, in one-letter code: Large ribosomal subunit protein bL17 (138 aa).

The protein belongs to the bacterial ribosomal protein bL17 family. Part of the 50S ribosomal subunit. Contacts protein L32.

This is Large ribosomal subunit protein bL17 from Granulibacter bethesdensis (strain ATCC BAA-1260 / CGDNIH1).